Consider the following 445-residue polypeptide: Tubulin beta-2A chain (445 aa).

Positions 1–4 match the MREI motif motif; it reads MREI. GTP is bound at residue glutamine 11. The residue at position 40 (serine 40) is a Phosphoserine. N6-acetyllysine; alternate is present on lysine 58. Lysine 58 carries the post-translational modification N6-succinyllysine; alternate. Residue lysine 58 forms a Glycyl lysine isopeptide (Lys-Gly) (interchain with G-Cter in ubiquitin); alternate linkage. Residues glutamate 69, serine 138, glycine 142, threonine 143, and glycine 144 each contribute to the GTP site. Glutamate 69 is a Mg(2+) binding site. A Phosphoserine; by CDK1 modification is found at serine 172. Residues asparagine 204 and asparagine 226 each contribute to the GTP site. 2 positions are modified to phosphothreonine: threonine 285 and threonine 290. Arginine 318 carries the post-translational modification Omega-N-methylarginine. A Glycyl lysine isopeptide (Lys-Gly) (interchain with G-Cter in ubiquitin) cross-link involves residue lysine 324. A disordered region spans residues 422 to 445; that stretch reads YQQYQDATADEQGEFEEEEGEDEA. Positions 429–445 are enriched in acidic residues; sequence TADEQGEFEEEEGEDEA. A 5-glutamyl polyglutamate modification is found at glutamate 438.

It belongs to the tubulin family. As to quaternary structure, interacts with ZNRF1. Part of a complex composed at least of ASH2L, EMSY, HCFC1, HSPA8, CCAR2, MATR3, MKI67, RBBP5, TUBB2A, WDR5 and ZNF335; this complex may have a histone H3-specific methyltransferase activity. Dimer of alpha and beta chains. A typical microtubule is a hollow water-filled tube with an outer diameter of 25 nm and an inner diameter of 15 nM. Alpha-beta heterodimers associate head-to-tail to form protofilaments running lengthwise along the microtubule wall with the beta-tubulin subunit facing the microtubule plus end conferring a structural polarity. Microtubules usually have 13 protofilaments but different protofilament numbers can be found in some organisms and specialized cells. It depends on Mg(2+) as a cofactor. Some glutamate residues at the C-terminus are polyglutamylated, resulting in polyglutamate chains on the gamma-carboxyl group. Polyglutamylation plays a key role in microtubule severing by spastin (SPAST). SPAST preferentially recognizes and acts on microtubules decorated with short polyglutamate tails: severing activity by SPAST increases as the number of glutamates per tubulin rises from one to eight, but decreases beyond this glutamylation threshold. Glutamylation is also involved in cilia motility. In terms of processing, some glutamate residues at the C-terminus are monoglycylated but not polyglycylated due to the absence of functional TTLL10 in human. Monoglycylation is mainly limited to tubulin incorporated into cilia and flagella axonemes, which is required for their stability and maintenance. Flagella glycylation controls sperm motility. Both polyglutamylation and monoglycylation can coexist on the same protein on adjacent residues, and lowering glycylation levels increases polyglutamylation, and reciprocally. Post-translationally, phosphorylated on Ser-172 by CDK1 during the cell cycle, from metaphase to telophase, but not in interphase. This phosphorylation inhibits tubulin incorporation into microtubules. In terms of tissue distribution, high expression in brain, where it represents 30% of all beta-tubulins.

It is found in the cytoplasm. The protein resides in the cytoskeleton. Its function is as follows. Tubulin is the major constituent of microtubules, a cylinder consisting of laterally associated linear protofilaments composed of alpha- and beta-tubulin heterodimers. Microtubules grow by the addition of GTP-tubulin dimers to the microtubule end, where a stabilizing cap forms. Below the cap, tubulin dimers are in GDP-bound state, owing to GTPase activity of alpha-tubulin. The polypeptide is Tubulin beta-2A chain (TUBB2A) (Homo sapiens (Human)).